Consider the following 103-residue polypeptide: Large ribosomal subunit protein uL24 (103 aa).

It belongs to the universal ribosomal protein uL24 family. Part of the 50S ribosomal subunit.

In terms of biological role, one of two assembly initiator proteins, it binds directly to the 5'-end of the 23S rRNA, where it nucleates assembly of the 50S subunit. One of the proteins that surrounds the polypeptide exit tunnel on the outside of the subunit. This is Large ribosomal subunit protein uL24 from Latilactobacillus sakei subsp. sakei (strain 23K) (Lactobacillus sakei subsp. sakei).